We begin with the raw amino-acid sequence, 147 residues long: UPF0306 protein YhbP (147 aa).

It belongs to the UPF0306 family.

The sequence is that of UPF0306 protein YhbP from Escherichia coli (strain SMS-3-5 / SECEC).